Consider the following 551-residue polypeptide: Cilia- and flagella-associated protein 45 (551 aa).

Disordered stretches follow at residues 1-30 (MPLSTAGILSSSSAASNRSRNKARYRTKAV) and 461-489 (RLEEEKKATGRLQHANELRRQVRENQQKE). The stretch at 157-526 (NNNKKLSDLE…IKRKKLEELR (370 aa)) forms a coiled coil.

Belongs to the CFAP45 family. As to quaternary structure, microtubule inner protein component of sperm flagellar doublet microtubules. Interacts with AK8; dimerization with AK8 may create a cavity at the interface of the dimer that can accommodate AMP. Interacts with CFAP52. Interacts with ENKUR. Directly interacts with DNALI1. Interacts with DNAH11. Interacts with DNAI1. Expressed in respiratory cells and in sperm (at protein level). Expressed in nasopharyngeal epithelium and trachea.

The protein resides in the cytoplasm. The protein localises to the cytoskeleton. It is found in the cilium axoneme. Its subcellular location is the flagellum axoneme. It localises to the cell projection. The protein resides in the cilium. The protein localises to the flagellum. Microtubule inner protein (MIP) part of the dynein-decorated doublet microtubules (DMTs) in cilia axoneme, which is required for motile cilia beating. It is an AMP-binding protein that may facilitate dynein ATPase-dependent ciliary and flagellar beating via adenine nucleotide homeostasis. May function as a donor of AMP to AK8 and hence promote ADP production. This is Cilia- and flagella-associated protein 45 from Homo sapiens (Human).